Here is a 265-residue protein sequence, read N- to C-terminus: Undecaprenyl-diphosphatase (265 aa).

A run of 8 helical transmembrane segments spans residues 1-21 (MDIL…FLPI), 39-59 (QGLA…ILYF), 86-106 (WCII…GNFI), 112-132 (SVSV…FADA), 140-160 (LAQM…LAMI), 186-206 (FSFL…GLKL), 219-239 (VGVL…LSFI), and 244-264 (MLPF…LVWF).

This sequence belongs to the UppP family.

The protein localises to the cell inner membrane. It catalyses the reaction di-trans,octa-cis-undecaprenyl diphosphate + H2O = di-trans,octa-cis-undecaprenyl phosphate + phosphate + H(+). In terms of biological role, catalyzes the dephosphorylation of undecaprenyl diphosphate (UPP). Confers resistance to bacitracin. The chain is Undecaprenyl-diphosphatase from Saccharophagus degradans (strain 2-40 / ATCC 43961 / DSM 17024).